The following is a 457-amino-acid chain: Cysteine--tRNA ligase (457 aa).

Cys27 contacts Zn(2+). Positions 29–39 (PTVYDFAHIGN) match the 'HIGH' region motif. Positions 211, 236, and 240 each coordinate Zn(2+). The 'KMSKS' region signature appears at 269–273 (KMSKS). Residue Lys272 coordinates ATP.

The protein belongs to the class-I aminoacyl-tRNA synthetase family. As to quaternary structure, monomer. It depends on Zn(2+) as a cofactor.

It is found in the cytoplasm. It carries out the reaction tRNA(Cys) + L-cysteine + ATP = L-cysteinyl-tRNA(Cys) + AMP + diphosphate. This chain is Cysteine--tRNA ligase, found in Ehrlichia ruminantium (strain Welgevonden).